Here is a 431-residue protein sequence, read N- to C-terminus: Enolase (431 aa).

Gln167 is a (2R)-2-phosphoglycerate binding site. Glu209 (proton donor) is an active-site residue. Residues Asp246, Glu289, and Asp316 each contribute to the Mg(2+) site. The (2R)-2-phosphoglycerate site is built by Lys341, Arg370, Ser371, and Lys392. Catalysis depends on Lys341, which acts as the Proton acceptor.

This sequence belongs to the enolase family. Component of the RNA degradosome, a multiprotein complex involved in RNA processing and mRNA degradation. The cofactor is Mg(2+).

The protein resides in the cytoplasm. Its subcellular location is the secreted. The protein localises to the cell surface. It carries out the reaction (2R)-2-phosphoglycerate = phosphoenolpyruvate + H2O. It functions in the pathway carbohydrate degradation; glycolysis; pyruvate from D-glyceraldehyde 3-phosphate: step 4/5. Its function is as follows. Catalyzes the reversible conversion of 2-phosphoglycerate (2-PG) into phosphoenolpyruvate (PEP). It is essential for the degradation of carbohydrates via glycolysis. The polypeptide is Enolase (Shewanella sediminis (strain HAW-EB3)).